Consider the following 105-residue polypeptide: Plastocyanin (105 aa).

One can recognise a Plastocyanin-like domain in the interval 1-105 (ETYTVKLGSD…GMVGKITVAG (105 aa)). Cu(2+)-binding residues include His-39, Cys-89, His-92, and Met-97.

The protein belongs to the plastocyanin family. Cu(2+) is required as a cofactor.

Its subcellular location is the cellular thylakoid membrane. Its function is as follows. Participates in electron transfer between P700 and the cytochrome b6-f complex in photosystem I. The protein is Plastocyanin (petE) of Anabaena variabilis.